The primary structure comprises 283 residues: Bifunctional protein FolD (283 aa).

166 to 168 is an NADP(+) binding site; sequence GAS.

The protein belongs to the tetrahydrofolate dehydrogenase/cyclohydrolase family. Homodimer.

It carries out the reaction (6R)-5,10-methylene-5,6,7,8-tetrahydrofolate + NADP(+) = (6R)-5,10-methenyltetrahydrofolate + NADPH. It catalyses the reaction (6R)-5,10-methenyltetrahydrofolate + H2O = (6R)-10-formyltetrahydrofolate + H(+). Its pathway is one-carbon metabolism; tetrahydrofolate interconversion. Catalyzes the oxidation of 5,10-methylenetetrahydrofolate to 5,10-methenyltetrahydrofolate and then the hydrolysis of 5,10-methenyltetrahydrofolate to 10-formyltetrahydrofolate. This chain is Bifunctional protein FolD, found in Coxiella burnetii (strain CbuG_Q212) (Coxiella burnetii (strain Q212)).